The following is a 576-amino-acid chain: Alkaline phosphatase PhoD (576 aa).

A signal peptide spans 1-32; that stretch reads MNSLLHHSFLKTVFSSLAIAIVTSSLSSVTIA. Asp68 and Thr107 together coordinate Zn(2+). Catalysis depends on Thr107, which acts as the Phosphothreonine intermediate. Cys108 and Cys144 are joined by a disulfide. Substrate is bound by residues Asn128 and 188 to 190; that span reads KDR. A disulfide bridge connects residues Cys248 and Cys332. 5 residues coordinate Zn(2+): Asp318, His322, Asp363, His364, and His508. Cys562 and Cys573 are joined by a disulfide.

In terms of assembly, monomer. It depends on Zn(2+) as a cofactor.

It catalyses the reaction a phosphate monoester + H2O = an alcohol + phosphate. Functionally, alkaline phosphatase with broad substrate specificity. Has phosphatase activity towards nucleotide and sugar phosphates with a preference to nucleotide phosphates. Has no phosphodiesterase activity. The polypeptide is Alkaline phosphatase PhoD (Zymomonas mobilis subsp. mobilis (strain ATCC 31821 / ZM4 / CP4)).